The primary structure comprises 636 residues: Bifunctional phosphonoacetaldehyde hydrolase/aminoethylphosphonate transaminase (636 aa).

The tract at residues 1–276 is phosphonoacetaldehyde hydrolase; the sequence is MKKIYGEKIK…IKSDFVPEND (276 aa). Asp15 (nucleophile) is an active-site residue. Residues Asp15 and Ala17 each contribute to the Mg(2+) site. Lys56 acts as the Schiff-base intermediate with substrate in catalysis. Asp189 is a binding site for Mg(2+). The 2-aminoethylphosphonate--pyruvate transaminase stretch occupies residues 277-636; that stretch reads YILLTPGPLS…ADVIEKFINR (360 aa). N6-(pyridoxal phosphate)lysine is present on Lys465.

It in the N-terminal section; belongs to the HAD-like hydrolase superfamily. PhnX family. In the C-terminal section; belongs to the class-V pyridoxal-phosphate-dependent aminotransferase family. PhnW subfamily. As to quaternary structure, homodimer. The cofactor is Mg(2+). Pyridoxal 5'-phosphate is required as a cofactor.

It catalyses the reaction (2-aminoethyl)phosphonate + pyruvate = phosphonoacetaldehyde + L-alanine. The catalysed reaction is phosphonoacetaldehyde + H2O = acetaldehyde + phosphate + H(+). Functionally, involved in phosphonate degradation. In Clostridioides difficile (strain 630) (Peptoclostridium difficile), this protein is Bifunctional phosphonoacetaldehyde hydrolase/aminoethylphosphonate transaminase (phnXW).